The chain runs to 623 residues: Zinc finger protein 131 (623 aa).

Positions 34–98 (TDITLIVDGH…TYTAKLMIQG (65 aa)) constitute a BTB domain. The Nuclear localization signal 1 motif lies at 137–148 (TGKNEAKKRKIA). 3 C2H2-type zinc fingers span residues 261–283 (FHCE…MKSH), 288–311 (FKCE…NCYH), and 328–350 (HVCQ…LRKH). Residues Lys-289 and Lys-295 each participate in a glycyl lysine isopeptide (Lys-Gly) (interchain with G-Cter in SUMO2) cross-link. The Nuclear localization signal 2 signature appears at 317-328 (VSKKQRTGKKIH). Residues 356–381 (FECPNCHERFARNSTLKCHLTACQTG) form a C2H2-type 4; degenerate zinc finger. 2 C2H2-type zinc fingers span residues 392–414 (YECQ…LVIH) and 420–443 (NHCT…SDAH). Positions 573–617 (NQEERESSQADAAEAAREDHEDAEDLETKPTVDSEAEKAENEDRT) are enriched in basic and acidic residues. Residues 573–623 (NQEERESSQADAAEAAREDHEDAEDLETKPTVDSEAEKAENEDRTALPVLE) form a disordered region. Lys-601 is covalently cross-linked (Glycyl lysine isopeptide (Lys-Gly) (interchain with G-Cter in SUMO)).

It belongs to the krueppel C2H2-type zinc-finger protein family. Monosumoylated at Lys-601 by CBX4 and UHRF2. Sumoylation may potentiate ZNF131 inhibition of estrogen signaling. Sumoylation does not interfere with ubiquitination. In terms of processing, ubiquitinated. Predominant expression is found in different brain areas such as the occipital and temporal lobe, the nucleus caudatus, hippocampus, and the cerebellum as well as in testis and thymus.

Its subcellular location is the nucleus. Plays a role during development and organogenesis as well as in the function of the adult central nervous system. May be involved in transcriptional regulation as a repressor of ESR1/ER-alpha signaling. The protein is Zinc finger protein 131 (ZNF131) of Homo sapiens (Human).